Here is a 215-residue protein sequence, read N- to C-terminus: Probable phosphoglycerate mutase GpmB (215 aa).

Residues 8-15 (RHGETQWN), 21-22 (QG), arginine 58, arginine 60, 82-85 (ELNM), 104-105 (RR), and 151-152 (GI) each bind substrate. The active-site Tele-phosphohistidine intermediate is the histidine 9. The active-site Proton donor/acceptor is glutamate 82.

This sequence belongs to the phosphoglycerate mutase family. GpmB subfamily.

It catalyses the reaction (2R)-2-phosphoglycerate = (2R)-3-phosphoglycerate. It functions in the pathway carbohydrate degradation; glycolysis; pyruvate from D-glyceraldehyde 3-phosphate: step 3/5. The polypeptide is Probable phosphoglycerate mutase GpmB (Escherichia fergusonii (strain ATCC 35469 / DSM 13698 / CCUG 18766 / IAM 14443 / JCM 21226 / LMG 7866 / NBRC 102419 / NCTC 12128 / CDC 0568-73)).